A 343-amino-acid polypeptide reads, in one-letter code: Arginine-hydroxylase NDUFAF5, mitochondrial (343 aa).

Residues 1 to 29 (MLRKVVLLRLCPLLGRPAVSASSGSRREV) constitute a mitochondrion transit peptide.

This sequence belongs to the methyltransferase superfamily. In terms of assembly, interacts with NDUFAF8, leading to stabilize NDUFAF5. Interacts with NDUFS7. Interacts with PYURF (via TRM112 domain); the interaction is direct and stabilizes NDUFAF5 protein.

Its subcellular location is the mitochondrion inner membrane. Arginine hydroxylase that mediates hydroxylation of 'Arg-122' of NDUFS7 and is involved in the assembly of mitochondrial NADH:ubiquinone oxidoreductase complex (complex I, MT-ND1) at early stages. May also have methyltransferase activity. This is Arginine-hydroxylase NDUFAF5, mitochondrial from Mus musculus (Mouse).